The following is a 274-amino-acid chain: Indole-3-glycerol phosphate synthase (274 aa).

It belongs to the TrpC family.

It carries out the reaction 1-(2-carboxyphenylamino)-1-deoxy-D-ribulose 5-phosphate + H(+) = (1S,2R)-1-C-(indol-3-yl)glycerol 3-phosphate + CO2 + H2O. Its pathway is amino-acid biosynthesis; L-tryptophan biosynthesis; L-tryptophan from chorismate: step 4/5. In Kineococcus radiotolerans (strain ATCC BAA-149 / DSM 14245 / SRS30216), this protein is Indole-3-glycerol phosphate synthase.